Reading from the N-terminus, the 198-residue chain is Thymidylate kinase (198 aa).

ATP is bound at residue 10 to 17; sequence GLDGSGKT.

The protein belongs to the thymidylate kinase family.

It carries out the reaction dTMP + ATP = dTDP + ADP. Its function is as follows. Phosphorylation of dTMP to form dTDP in both de novo and salvage pathways of dTTP synthesis. The sequence is that of Thymidylate kinase from Thermus thermophilus (strain ATCC BAA-163 / DSM 7039 / HB27).